Reading from the N-terminus, the 130-residue chain is Small ribosomal subunit protein uS11 (130 aa).

It belongs to the universal ribosomal protein uS11 family. As to quaternary structure, part of the 30S ribosomal subunit. Interacts with proteins S7 and S18. Binds to IF-3.

In terms of biological role, located on the platform of the 30S subunit, it bridges several disparate RNA helices of the 16S rRNA. Forms part of the Shine-Dalgarno cleft in the 70S ribosome. The protein is Small ribosomal subunit protein uS11 of Shewanella halifaxensis (strain HAW-EB4).